The following is a 391-amino-acid chain: Elongation factor Tu 2 (391 aa).

Positions 10-201 constitute a tr-type G domain; it reads KPHVNIGTIG…EVDNYIPTPE (192 aa). Positions 19–26 are G1; it reads GHVDHGKT. A GTP-binding site is contributed by 19-26; sequence GHVDHGKT. Mg(2+) is bound at residue Thr-26. The segment at 55–59 is G2; that stretch reads GITIS. The tract at residues 76-79 is G3; sequence DCPG. Residues 76–80 and 131–134 each bind GTP; these read DCPGH and NKVD. The segment at 131–134 is G4; sequence NKVD. A G5 region spans residues 169-171; sequence SAL.

Belongs to the TRAFAC class translation factor GTPase superfamily. Classic translation factor GTPase family. EF-Tu/EF-1A subfamily. Monomer.

The protein resides in the cytoplasm. It catalyses the reaction GTP + H2O = GDP + phosphate + H(+). Functionally, GTP hydrolase that promotes the GTP-dependent binding of aminoacyl-tRNA to the A-site of ribosomes during protein biosynthesis. The sequence is that of Elongation factor Tu 2 from Bartonella quintana (strain Toulouse) (Rochalimaea quintana).